Reading from the N-terminus, the 157-residue chain is MGKSDKIIPIAENKEAKAKYDILETYEAGIVLKGSEVKSLREKGTVSFKDSFVRIENGEAWLYNLYIAPYKHATIENHDPLRKRKLLLHKREIMRLYGKVQEKGYTIIPLKLYWKNNKVKVLIALAKGKKLYDRRRELKEKAMKRELEREFKGKIHL.

This sequence belongs to the SmpB family.

It is found in the cytoplasm. Its function is as follows. Required for rescue of stalled ribosomes mediated by trans-translation. Binds to transfer-messenger RNA (tmRNA), required for stable association of tmRNA with ribosomes. tmRNA and SmpB together mimic tRNA shape, replacing the anticodon stem-loop with SmpB. tmRNA is encoded by the ssrA gene; the 2 termini fold to resemble tRNA(Ala) and it encodes a 'tag peptide', a short internal open reading frame. During trans-translation Ala-aminoacylated tmRNA acts like a tRNA, entering the A-site of stalled ribosomes, displacing the stalled mRNA. The ribosome then switches to translate the ORF on the tmRNA; the nascent peptide is terminated with the 'tag peptide' encoded by the tmRNA and targeted for degradation. The ribosome is freed to recommence translation, which seems to be the essential function of trans-translation. The chain is SsrA-binding protein from Aquifex aeolicus (strain VF5).